The chain runs to 374 residues: Putative cullin-like protein 2 (374 aa).

This sequence belongs to the cullin family.

The chain is Putative cullin-like protein 2 from Arabidopsis thaliana (Mouse-ear cress).